The chain runs to 148 residues: Large ribosomal subunit protein bL9 (148 aa).

Belongs to the bacterial ribosomal protein bL9 family.

Its function is as follows. Binds to the 23S rRNA. The protein is Large ribosomal subunit protein bL9 of Parafrankia sp. (strain EAN1pec).